The sequence spans 437 residues: Vasoactive intestinal polypeptide receptor 2 (437 aa).

A signal peptide spans 1 to 22; that stretch reads MRASVVLTCYCWLLVRVSSIHP. Topologically, residues 23 to 123 are extracellular; the sequence is ECRFHLEIQE…EDESKISFYI (101 aa). Cystine bridges form between C37–C60, C51–C92, and C74–C108. 3 N-linked (GlcNAc...) asparagine glycosylation sites follow: N57, N87, and N91. The chain crosses the membrane as a helical span at residues 124-149; sequence LVKAIYTLGYSVSLMSLTTGSIIICL. At 150–157 the chain is on the cytoplasmic side; it reads FRKLHCTR. A helical transmembrane segment spans residues 158-179; sequence NYIHLNLFLSFMLRAISVLVKD. Residues 180–202 lie on the Extracellular side of the membrane; it reads SVLYSSSGLLRCHDQPASWVGCK. A disulfide bridge connects residues C201 and C270. The chain crosses the membrane as a helical span at residues 203-227; it reads LSLVFFQYCIMANFYWLLVEGLYLH. Over 228-238 the chain is Cytoplasmic; sequence TLLVAILPPSR. Residues 239 to 260 form a helical membrane-spanning segment; the sequence is CFLAYLLIGWGIPSVCIGAWTA. At 261–279 the chain is on the extracellular side; that stretch reads TRLSLEDTGCWDTNDHSIP. A helical membrane pass occupies residues 280 to 303; sequence WWVIRMPILISIVVNFALFISIVR. Topologically, residues 304–324 are cytoplasmic; the sequence is ILLQKLTSPDVGGNDQSQYKR. A helical transmembrane segment spans residues 325–345; that stretch reads LAKSTLLLIPLFGVHYMVFAA. Residues 346 to 353 are Extracellular-facing; that stretch reads FPIGISST. Residues 354–377 form a helical membrane-spanning segment; that stretch reads YQILFELCVGSFQGLVVAVLYCFL. At 378–437 the chain is on the cytoplasmic side; sequence NSEVQCELKRRWRGLCLTQAGSRDYRLHSWSMSRNGSESALQIHRGSRTQSFLQSETSVI.

This sequence belongs to the G-protein coupled receptor 2 family. Interacts with ADCYAP1/PACAP (via N-terminal extracellular domain); activated by PACAP27 and CAPAC38 neuropeptides. Interacts with VIP; the interaction results in VIPR1 activation. Expressed at high levels in the MIN6 cells, at moderate levels in pancreatic islets, insulin-secreting cells, lung, brain, stomach, and colon, and at low levels in the heart.

It localises to the cell membrane. Functionally, g protein-coupled receptor activated by the neuropeptides vasoactive intestinal peptide (VIP) and pituitary adenylate cyclase-activating polypeptide (ADCYAP1/PACAP). Binds VIP and both PACAP27 and PACAP38 bioactive peptides with the order of ligand affinity of VIP = PACAP38 &gt; PACAP27. Ligand binding causes a conformation change that triggers signaling via guanine nucleotide-binding proteins (G proteins) and modulates the activity of downstream effectors. Activates cAMP-dependent pathway. May be coupled to phospholipase C. This chain is Vasoactive intestinal polypeptide receptor 2, found in Mus musculus (Mouse).